A 301-amino-acid chain; its full sequence is Ribonuclease Z (301 aa).

7 residues coordinate Zn(2+): His61, His63, Asp65, His66, His140, Asp211, and His269. Asp65 serves as the catalytic Proton acceptor.

The protein belongs to the RNase Z family. Homodimer. Zn(2+) serves as cofactor.

It carries out the reaction Endonucleolytic cleavage of RNA, removing extra 3' nucleotides from tRNA precursor, generating 3' termini of tRNAs. A 3'-hydroxy group is left at the tRNA terminus and a 5'-phosphoryl group is left at the trailer molecule.. Its function is as follows. Zinc phosphodiesterase, which displays some tRNA 3'-processing endonuclease activity. Probably involved in tRNA maturation, by removing a 3'-trailer from precursor tRNA. This chain is Ribonuclease Z, found in Bradyrhizobium sp. (strain ORS 278).